The sequence spans 379 residues: UDP-4-amino-4-deoxy-L-arabinose--oxoglutarate aminotransferase (379 aa).

Lys182 carries the N6-(pyridoxal phosphate)lysine modification.

It belongs to the DegT/DnrJ/EryC1 family. ArnB subfamily. Homodimer. Pyridoxal 5'-phosphate serves as cofactor.

The catalysed reaction is UDP-4-amino-4-deoxy-beta-L-arabinose + 2-oxoglutarate = UDP-beta-L-threo-pentopyranos-4-ulose + L-glutamate. The protein operates within nucleotide-sugar biosynthesis; UDP-4-deoxy-4-formamido-beta-L-arabinose biosynthesis; UDP-4-deoxy-4-formamido-beta-L-arabinose from UDP-alpha-D-glucuronate: step 2/3. It functions in the pathway bacterial outer membrane biogenesis; lipopolysaccharide biosynthesis. Its function is as follows. Catalyzes the conversion of UDP-4-keto-arabinose (UDP-Ara4O) to UDP-4-amino-4-deoxy-L-arabinose (UDP-L-Ara4N). The modified arabinose is attached to lipid A and is required for resistance to polymyxin and cationic antimicrobial peptides. The chain is UDP-4-amino-4-deoxy-L-arabinose--oxoglutarate aminotransferase from Escherichia fergusonii (strain ATCC 35469 / DSM 13698 / CCUG 18766 / IAM 14443 / JCM 21226 / LMG 7866 / NBRC 102419 / NCTC 12128 / CDC 0568-73).